The following is a 510-amino-acid chain: GMP synthase [glutamine-hydrolyzing] (510 aa).

The 191-residue stretch at 5–195 folds into the Glutamine amidotransferase type-1 domain; sequence LVFIIDFGGQ…LFNICELKGD (191 aa). The Nucleophile role is filled by C82. Active-site residues include H169 and E171. Residues 196–385 enclose the GMPS ATP-PPase domain; sequence WSVTSFAEEK…LGIPHKLVWR (190 aa). Residue 223–229 participates in ATP binding; it reads SGGVDSS.

In terms of assembly, homodimer.

It catalyses the reaction XMP + L-glutamine + ATP + H2O = GMP + L-glutamate + AMP + diphosphate + 2 H(+). Its pathway is purine metabolism; GMP biosynthesis; GMP from XMP (L-Gln route): step 1/1. In terms of biological role, catalyzes the synthesis of GMP from XMP. This Clostridium tetani (strain Massachusetts / E88) protein is GMP synthase [glutamine-hydrolyzing].